Here is a 483-residue protein sequence, read N- to C-terminus: Arginine/agmatine antiporter (483 aa).

12 helical membrane-spanning segments follow: residues 11 to 33 (ILGTLALTGIVISYMIGGGIFSL), 48 to 70 (LAWMLSGIGIFFIANTFKTLSII), 90 to 112 (VGFTIAWGYWLCQIFGNVGYAVI), 127 to 149 (GGNTIPAILLGSLLIWIFNYIVL), 156 to 178 (SFVNIIGVVCTLIPLLLFILITA), 209 to 228 (TMLVTLWAFIGIEGAVVISG), 241 to 263 (ILGFSGCLLIYVLLSLLPFGSLF), 293 to 315 (TGLLIAVLTSWLSWTILASEIPY), 335 to 357 (APSFSLFMTSGLMQITMLLVYFS), 367 to 389 (ITGVMVLPAYLTSSLFLVKFSLS), 415 to 435 (LWLIYAGGLQHLFMVAILLAL), and 458 to 477 (EILKMTIMALAALLAIFLFS).

The protein belongs to the amino acid-polyamine-organocation (APC) superfamily. Basic amino acid/polyamine antiporter (APA) (TC 2.A.3.2) family.

Its subcellular location is the cell inner membrane. Catalyzes the exchange of L-arginine for agmatine. The arginine uptake by the bacterium in the macrophage may be a virulence factor against the host innate immune response. The protein is Arginine/agmatine antiporter (aaxC) of Chlamydia trachomatis serovar L2 (strain ATCC VR-902B / DSM 19102 / 434/Bu).